Consider the following 480-residue polypeptide: Initiation-specific alpha-1,6-mannosyltransferase (480 aa).

Over 1–15 (MSRKLSHLIATRKSK) the chain is Cytoplasmic. The chain crosses the membrane as a helical; Signal-anchor for type II membrane protein span at residues 16–30 (TIVVTVLLIYSLLTF). The Lumenal segment spans residues 31-480 (HLSNKRLLSQ…EDADKNAGHK (450 aa)). The DXD motif signature appears at 187-189 (DMD). N-linked (GlcNAc...) asparagine glycans are attached at residues asparagine 203, asparagine 281, asparagine 341, and asparagine 393.

It belongs to the glycosyltransferase 32 family. The cofactor is Mn(2+). Glycosylated.

The protein localises to the endoplasmic reticulum membrane. Its subcellular location is the golgi apparatus membrane. The catalysed reaction is Transfers an alpha-D-mannosyl residue from GDP-mannose into lipid-linked oligosaccharide, forming an alpha-(1-&gt;6)-D-mannosyl-D-mannose linkage.. In terms of biological role, mannosyltransferase involved in outer chain elongation of asparagine-linked oligosaccharides of the type Man(9)GlcNAc(2). Adds the first alpha-1,6-mannose to the Man(8)GlcNAc(2) and Man(9)GlcNAc(2), but not Man(5)GlcNAc(2), endoplasmic reticulum intermediates. Represents the first enzymatic event required for synthesis of outer chain mannose linkages on yeast secretory proteins. Also has the potential to transfer a second alpha-1,6-mannose to the Man(8)GlcNAc(2) core oligosaccharide. The polypeptide is Initiation-specific alpha-1,6-mannosyltransferase (Saccharomyces cerevisiae (strain ATCC 204508 / S288c) (Baker's yeast)).